Reading from the N-terminus, the 116-residue chain is Iron-sulfur cluster assembly protein CyaY (116 aa).

The protein belongs to the frataxin family.

Its function is as follows. Involved in iron-sulfur (Fe-S) cluster assembly. May act as a regulator of Fe-S biogenesis. In Buchnera aphidicola subsp. Acyrthosiphon pisum (strain APS) (Acyrthosiphon pisum symbiotic bacterium), this protein is Iron-sulfur cluster assembly protein CyaY.